The primary structure comprises 63 residues: Metallothionein-2 (63 aa).

The tract at residues 1 to 30 is beta; it reads MDPQDCTCAAGDSCSCAGSCKCKNCRCQSC. 20 residues coordinate a divalent metal cation: Cys-6, Cys-8, Cys-14, Cys-16, Cys-20, Cys-22, Cys-25, Cys-27, Cys-30, Cys-34, Cys-35, Cys-37, Cys-38, Cys-42, Cys-45, Cys-49, Cys-51, Cys-59, Cys-61, and Cys-62. The interval 31–63 is alpha; the sequence is RKSCCSCCPASCSNCAKGCVCKEPSSSKCSCCH.

The protein belongs to the metallothionein superfamily. Type 1 family.

Its function is as follows. Metallothioneins have a high content of cysteine residues that bind various heavy metals. This is Metallothionein-2 from Columba livia (Rock dove).